The chain runs to 73 residues: MKFHIIFCLLAALMMTSAFAEVTVEPLRHSNKNPTESECKKACADAYAKGDQSKIPEAHNFRDYYCNCHVIVQ.

A signal peptide spans 1 to 20 (MKFHIIFCLLAALMMTSAFA).

Post-translationally, contains 2 disulfide bonds. As to expression, expressed by the venom gland.

It is found in the secreted. Its function is as follows. Voltage-gated sodium channel inhibitor. The protein is Mu-scoloptoxin(15)-Ssd1a of Scolopendra dehaani (Thai centipede).